Reading from the N-terminus, the 432-residue chain is Adenylosuccinate synthetase (432 aa).

GTP-binding positions include 13–19 (GDEGKGK) and 41–43 (GHT). The Proton acceptor role is filled by D14. Mg(2+) is bound by residues D14 and G41. Residues 14 to 17 (DEGK), 39 to 42 (NAGH), T131, R145, Q226, T241, and R305 contribute to the IMP site. H42 (proton donor) is an active-site residue. 301-307 (SVTGRAR) is a substrate binding site. GTP contacts are provided by residues R307, 333–335 (KLD), and 416–418 (STG).

The protein belongs to the adenylosuccinate synthetase family. Homodimer. It depends on Mg(2+) as a cofactor.

Its subcellular location is the cytoplasm. It carries out the reaction IMP + L-aspartate + GTP = N(6)-(1,2-dicarboxyethyl)-AMP + GDP + phosphate + 2 H(+). Its pathway is purine metabolism; AMP biosynthesis via de novo pathway; AMP from IMP: step 1/2. Plays an important role in the de novo pathway of purine nucleotide biosynthesis. Catalyzes the first committed step in the biosynthesis of AMP from IMP. This Neisseria gonorrhoeae (strain ATCC 700825 / FA 1090) protein is Adenylosuccinate synthetase.